The sequence spans 312 residues: Ribosomal RNA small subunit methyltransferase H (312 aa).

Residues 35-37 (GGH), aspartate 55, phenylalanine 79, aspartate 101, and glutamine 108 each bind S-adenosyl-L-methionine. The tract at residues 286-306 (LKPSEHEVNENSRSRSSVLRV) is disordered. Positions 287–298 (KPSEHEVNENSR) are enriched in basic and acidic residues.

Belongs to the methyltransferase superfamily. RsmH family.

It is found in the cytoplasm. The catalysed reaction is cytidine(1402) in 16S rRNA + S-adenosyl-L-methionine = N(4)-methylcytidine(1402) in 16S rRNA + S-adenosyl-L-homocysteine + H(+). In terms of biological role, specifically methylates the N4 position of cytidine in position 1402 (C1402) of 16S rRNA. This chain is Ribosomal RNA small subunit methyltransferase H, found in Aeromonas hydrophila subsp. hydrophila (strain ATCC 7966 / DSM 30187 / BCRC 13018 / CCUG 14551 / JCM 1027 / KCTC 2358 / NCIMB 9240 / NCTC 8049).